The sequence spans 149 residues: Basic phospholipase A2 homolog MitTx-beta (149 aa).

Positions 1 to 30 (MDKMNPAHLLVLAAVCVSLLGASSIPPQAL) are cleaved as a signal peptide. 7 disulfides stabilise this stretch: cysteine 41-cysteine 100, cysteine 55-cysteine 148, cysteine 57-cysteine 73, cysteine 72-cysteine 130, cysteine 79-cysteine 123, cysteine 89-cysteine 116, and cysteine 109-cysteine 121.

The protein belongs to the phospholipase A2 family. Group I subfamily. K49 sub-subfamily. Heterodimer of an alpha (Kunitz-type) and a beta (phospholipase A2 homolog) chains; non-covalently-linked. Expressed by the venom gland.

Its subcellular location is the secreted. Functionally, heterodimer: MitTx, a heteromeric complex between Kunitz- and phospholipase-A2-like proteins, potently, persistently and selectively activates rat and chicken acid-sensing ion channel ASIC1. Both alternatively spliced rat isoforms ASIC1a and ASIC1b are activated, with a higher potency for ASIC1a (EC(50)=9.4 nM) vs ASIC1b (EC(50)=23 nM). The rat ASIC3 subtype is also sensitive to the heterodimer, but with a lower potency (EC(50)=830 nM). On rat ASIC2a, the toxin shows a very weak activation, but produces a remarkable potentiation (&gt;100-fold) of protons when the extracellular pH drops below neutrality. Moderate and weak activations are also observed on the heterotrimers Asic1a-Asic2a and Asic1a-Asic3 (expressed in CHO cells), respectively. The binding sites of the beta subunit of MitTx and the spider psalmotoxin-1 toxin overlap, explaining why these toxins are mutually exclusive. In vivo, the heterodimer elicits robust pain-related behavior in mice by activation of ASIC1 channels on capsaicin-sensitive nerve fibers. Its function is as follows. Monomer: does not have phospholipase A2 activity but may maintain some lipid-binding character from its PLA2 lineage, which could aid in effecting neuronal depolarization. This chain is Basic phospholipase A2 homolog MitTx-beta, found in Micrurus tener tener (Texas coral snake).